A 477-amino-acid chain; its full sequence is MQNFEVIIGIEVHTALNTKTKMFSNAATSHKSIPNTLINEIDLALPGTLPTVNQEVVHKGLFLANALHMRTNHQFIAFDRKHYYYLDLPKGYQITQNYFPIGQNGYIQIIDEYNNLKRIRIKQIHLEEDTAKQTNIGNQIYLDYNRAGWPLIEIVSEADLRSAQETVLFLEELRKILLFNDISDAKMEDGSLRVDVNVSIRPQGAKKFGTKVEIKNINSISNVAKAIDYEIRRQLNLILLNQNVEQQTRRFDDNTNTTVFMRSKNDAINYRYIREANIAPIHLSDDYVKKMFLTKSCSINDLRQQLAQKGLVSSAIEQLLSDGPLFKAFKYVDKIVNNPLSVYKWLCLEFIGLINKNTQNIEEITPELLQKIARMILLFDQTLINGKQTKIILEKIYLTNKDPQILIKELGFEQITNENEITKLWHQILAKNQEMLLQYNERPDRVEKFFMGEIMKLTKAQANPTISFNVLKKILQK.

It belongs to the GatB/GatE family. GatB subfamily. Heterotrimer of A, B and C subunits.

It catalyses the reaction L-glutamyl-tRNA(Gln) + L-glutamine + ATP + H2O = L-glutaminyl-tRNA(Gln) + L-glutamate + ADP + phosphate + H(+). The catalysed reaction is L-aspartyl-tRNA(Asn) + L-glutamine + ATP + H2O = L-asparaginyl-tRNA(Asn) + L-glutamate + ADP + phosphate + 2 H(+). Functionally, allows the formation of correctly charged Asn-tRNA(Asn) or Gln-tRNA(Gln) through the transamidation of misacylated Asp-tRNA(Asn) or Glu-tRNA(Gln) in organisms which lack either or both of asparaginyl-tRNA or glutaminyl-tRNA synthetases. The reaction takes place in the presence of glutamine and ATP through an activated phospho-Asp-tRNA(Asn) or phospho-Glu-tRNA(Gln). The chain is Aspartyl/glutamyl-tRNA(Asn/Gln) amidotransferase subunit B from Ureaplasma parvum serovar 3 (strain ATCC 27815 / 27 / NCTC 11736).